The following is a 331-amino-acid chain: CRISPR-associated endonuclease Cas1 1 (331 aa).

Mn(2+) is bound by residues Glu161, His226, and Glu241.

This sequence belongs to the CRISPR-associated endonuclease Cas1 family. Homodimer, forms a heterotetramer with a Cas2 homodimer. Mg(2+) serves as cofactor. It depends on Mn(2+) as a cofactor.

Functionally, CRISPR (clustered regularly interspaced short palindromic repeat), is an adaptive immune system that provides protection against mobile genetic elements (viruses, transposable elements and conjugative plasmids). CRISPR clusters contain spacers, sequences complementary to antecedent mobile elements, and target invading nucleic acids. CRISPR clusters are transcribed and processed into CRISPR RNA (crRNA). Acts as a dsDNA endonuclease. Involved in the integration of spacer DNA into the CRISPR cassette. The polypeptide is CRISPR-associated endonuclease Cas1 1 (Methanospirillum hungatei JF-1 (strain ATCC 27890 / DSM 864 / NBRC 100397 / JF-1)).